The chain runs to 430 residues: Adenylosuccinate synthetase (430 aa).

GTP-binding positions include 12 to 18 and 40 to 42; these read GDEGKGK and GHT. Residue D13 is the Proton acceptor of the active site. Positions 13 and 40 each coordinate Mg(2+). IMP is bound by residues 13 to 16, 38 to 41, T128, R142, Q223, T238, and R302; these read DEGK and NAGH. The Proton donor role is filled by H41. Residue 298-304 coordinates substrate; it reads TTTGRPR. GTP contacts are provided by residues R304, 330 to 332, and 412 to 414; these read SID and SVG.

Belongs to the adenylosuccinate synthetase family. As to quaternary structure, homodimer. Mg(2+) is required as a cofactor.

It localises to the cytoplasm. The enzyme catalyses IMP + L-aspartate + GTP = N(6)-(1,2-dicarboxyethyl)-AMP + GDP + phosphate + 2 H(+). It functions in the pathway purine metabolism; AMP biosynthesis via de novo pathway; AMP from IMP: step 1/2. Plays an important role in the de novo pathway of purine nucleotide biosynthesis. Catalyzes the first committed step in the biosynthesis of AMP from IMP. The sequence is that of Adenylosuccinate synthetase from Streptococcus sanguinis (strain SK36).